The primary structure comprises 339 residues: MVIVKSWQKIFALLVVLLLCIGCSKVPSTSYNPWAVVSLPTEAKLLDIAFTENPQHGFLVGSNATLLETNDGGNNWQPLNLALDDDRYRFDSVSFAGKEGWIAGEPSLLLHTTDEGRSWSRIPLSEKLPGNPIAIQALGTDIAEMATDVGAIYKTTDGGKNWKAQVEAAVGVVRNLERSEDGKYVAVSAKGSFYSTWEPGQNAWVPHNRNSSRRVENMGFSQDGLWLLARGGQVQFSDPTKPDEWLDAQTPELATSWGLLDMAYRTPNEVWIGGGSGNLLVSTDGGKTWEKDRDVEEVAANFYKVVFLKPDQGFVIGDRGVLLKYQPEAAKTATTEPAA.

An N-terminal signal peptide occupies residues 1 to 22 (MVIVKSWQKIFALLVVLLLCIG). Cys-23 carries the N-palmitoyl cysteine lipid modification. Cys-23 is lipidated: S-diacylglycerol cysteine.

This sequence belongs to the Ycf48 family. Part of early PSII assembly complexes which includes D1 (psbA) and PsbI; not found in mature PSII. Binds to the lumenal side of PSII complexes. Interacts with YidC.

It localises to the cellular thylakoid membrane. Its function is as follows. A factor required for optimal assembly of photosystem II (PSII), acting in the early stages of PSII assembly. Also plays a role in replacement of photodamaged D1 (psbA). Assists YidC in synthesis of chlorophyll-binding proteins. The chain is Photosystem II assembly lipoprotein Ycf48 from Trichormus variabilis (strain ATCC 29413 / PCC 7937) (Anabaena variabilis).